Consider the following 282-residue polypeptide: Shikimate dehydrogenase (NADP(+)) (282 aa).

Shikimate-binding positions include 16–18 (SLS) and Thr63. Lys67 functions as the Proton acceptor in the catalytic mechanism. Positions 88 and 103 each coordinate shikimate. Residues 128–132 (GAGGA) and Gly243 contribute to the NADP(+) site.

It belongs to the shikimate dehydrogenase family. In terms of assembly, homodimer.

It carries out the reaction shikimate + NADP(+) = 3-dehydroshikimate + NADPH + H(+). Its pathway is metabolic intermediate biosynthesis; chorismate biosynthesis; chorismate from D-erythrose 4-phosphate and phosphoenolpyruvate: step 4/7. Functionally, involved in the biosynthesis of the chorismate, which leads to the biosynthesis of aromatic amino acids. Catalyzes the reversible NADPH linked reduction of 3-dehydroshikimate (DHSA) to yield shikimate (SA). The sequence is that of Shikimate dehydrogenase (NADP(+)) from Xylella fastidiosa (strain 9a5c).